We begin with the raw amino-acid sequence, 357 residues long: RNA 3'-terminal phosphate cyclase (357 aa).

ATP is bound by residues glutamine 102 and 293-296 (HMGD). Catalysis depends on histidine 319, which acts as the Tele-AMP-histidine intermediate.

The protein belongs to the RNA 3'-terminal cyclase family. Type 1 subfamily.

The protein resides in the cytoplasm. It catalyses the reaction a 3'-end 3'-phospho-ribonucleotide-RNA + ATP = a 3'-end 2',3'-cyclophospho-ribonucleotide-RNA + AMP + diphosphate. In terms of biological role, catalyzes the conversion of 3'-phosphate to a 2',3'-cyclic phosphodiester at the end of RNA. The mechanism of action of the enzyme occurs in 3 steps: (A) adenylation of the enzyme by ATP; (B) transfer of adenylate to an RNA-N3'P to produce RNA-N3'PP5'A; (C) and attack of the adjacent 2'-hydroxyl on the 3'-phosphorus in the diester linkage to produce the cyclic end product. The biological role of this enzyme is unknown but it is likely to function in some aspects of cellular RNA processing. The polypeptide is RNA 3'-terminal phosphate cyclase (Staphylothermus marinus (strain ATCC 43588 / DSM 3639 / JCM 9404 / F1)).